The following is a 294-amino-acid chain: uncharacterized protein (294 aa).

This is an uncharacterized protein from Methanocaldococcus jannaschii (strain ATCC 43067 / DSM 2661 / JAL-1 / JCM 10045 / NBRC 100440) (Methanococcus jannaschii).